Reading from the N-terminus, the 304-residue chain is MKELLKELVEKNRKFTADGNVANYIPELDKADKNALGIYVTTLDGQEFFAGDYNTKFTIQSISKIISLMLAILDNGEEYVFSKVGMEPSGDPFNSIRKLETSSRKKPYNPMINAGAIAVASMIKGKDDREKFSRLLNFAKLITEDDSLDLNYKIYIGESDTGFRNYSMAYFLKGEGIIEGNVNEALTVYFKQCSIEGTAKTISTLGKFLANDGVLSNGERILTTRMAKIIKTLMVTCGMYDSSGEFAVRVGIPSKSGVGGGICSVVPGKMGIGVYGPSLDKKGNSLAGGHLLEDLSAELSLNIF.

S61, N113, E158, N165, Y189, Y240, and V258 together coordinate substrate.

It belongs to the glutaminase family. Homotetramer.

It carries out the reaction L-glutamine + H2O = L-glutamate + NH4(+). In Fusobacterium nucleatum subsp. nucleatum (strain ATCC 25586 / DSM 15643 / BCRC 10681 / CIP 101130 / JCM 8532 / KCTC 2640 / LMG 13131 / VPI 4355), this protein is Glutaminase.